Reading from the N-terminus, the 352-residue chain is Replication factor C subunit 5 (352 aa).

This sequence belongs to the activator 1 small subunits family. As to quaternary structure, heteropentamer of subunits rfc1, rfc2, rfc3, rfc4 and rfc5 that forms a complex with PCNA in the presence of ATP.

It is found in the nucleus. In terms of biological role, the elongation of primed DNA templates by DNA polymerase delta and epsilon requires the action of the accessory proteins proliferating cell nuclear antigen (PCNA) and activator 1. This chain is Replication factor C subunit 5, found in Neurospora crassa (strain ATCC 24698 / 74-OR23-1A / CBS 708.71 / DSM 1257 / FGSC 987).